An 86-amino-acid polypeptide reads, in one-letter code: Large ribosomal subunit protein bL31B (86 aa).

Belongs to the bacterial ribosomal protein bL31 family. Type B subfamily. As to quaternary structure, part of the 50S ribosomal subunit.

The polypeptide is Large ribosomal subunit protein bL31B (Saccharopolyspora erythraea (strain ATCC 11635 / DSM 40517 / JCM 4748 / NBRC 13426 / NCIMB 8594 / NRRL 2338)).